We begin with the raw amino-acid sequence, 269 residues long: Putative hydro-lyase M446_2125 (269 aa).

The protein belongs to the D-glutamate cyclase family.

This Methylobacterium sp. (strain 4-46) protein is Putative hydro-lyase M446_2125.